A 56-amino-acid chain; its full sequence is Frontoxin I (56 aa).

4 disulfide bridges follow: Cys3/Cys22, Cys17/Cys39, Cys41/Cys52, and Cys53/Cys56.

This sequence belongs to the three-finger toxin family. Short-chain subfamily. Type I alpha-neurotoxin sub-subfamily. In terms of tissue distribution, expressed by the venom gland.

It is found in the secreted. Binds to muscle nicotinic acetylcholine receptor (nAChR) and inhibit acetylcholine from binding to the receptor, thereby impairing neuromuscular transmission. The protein is Frontoxin I of Micrurus frontalis (Coral snake).